Here is a 118-residue protein sequence, read N- to C-terminus: Vitelline coat lysin (118 aa).

This chain is Vitelline coat lysin, found in Tegula pfeifferi (Pfeiffer's top shell).